The sequence spans 387 residues: MEDDAPVIYGLEFQARALTAQTAETDAIRFLVGTQSLRYDNQIHVIDFDDENNIINKNVLLHHAGEIWQIGASPADRNVLATCYNKISDSKVMTCAAVWRIPKELQGGNHESPDDTSSNAQSLELLCHLDSTAHGNMACVTWEPLGDGKKLLSLADNYLLIWDLQESSTKSVLSSSATLEGKGQLRFTSGKWSPHHNCTQVATANDTAIRGWDIRSMRQIYCIENAHGQLVRDLDFNPNKQYYLASCGDDCKVKFWDTRNIHEPVKTLEEHSHWVWSVRYNHSHDQLVLTGSSDSRVILSNMVSISSEPFGHLVDDEDLSDQEDNPQEEKTKEPLQDSIIGTYEEHEDSVYAVEWSSADPWLFASLSYDGRLVINRVPRALKYNILL.

WD repeat units follow at residues 132–172 (TAHG…TKSV), 182–222 (KGQL…QIYC), 226–266 (AHGQ…EPVK), and 270–310 (EHSH…SEPF). The tract at residues 311-339 (GHLVDDEDLSDQEDNPQEEKTKEPLQDSI) is disordered. The segment covering 315 to 326 (DDEDLSDQEDNP) has biased composition (acidic residues). The stretch at 345–385 (EHEDSVYAVEWSSADPWLFASLSYDGRLVINRVPRALKYNI) is one WD 5 repeat.

Belongs to the WD repeat EIPR1 family.

The protein localises to the golgi apparatus. The protein resides in the trans-Golgi network. Functionally, may act as a component of endosomal retrieval machinery that is involved in protein transport from early endosomes to either recycling endosomes or the trans-Golgi network. In Xenopus laevis (African clawed frog), this protein is EARP-interacting protein homolog.